The sequence spans 99 residues: HssA/B-like protein 42 (99 aa).

The disordered stretch occupies residues Met1–Ser29.

This sequence belongs to the hssA/B family.

The polypeptide is HssA/B-like protein 42 (hssl42) (Dictyostelium discoideum (Social amoeba)).